The following is a 127-amino-acid chain: Ribosome-binding factor A (127 aa).

This sequence belongs to the RbfA family. As to quaternary structure, monomer. Binds 30S ribosomal subunits, but not 50S ribosomal subunits or 70S ribosomes.

It localises to the cytoplasm. In terms of biological role, one of several proteins that assist in the late maturation steps of the functional core of the 30S ribosomal subunit. Associates with free 30S ribosomal subunits (but not with 30S subunits that are part of 70S ribosomes or polysomes). Required for efficient processing of 16S rRNA. May interact with the 5'-terminal helix region of 16S rRNA. The protein is Ribosome-binding factor A of Nitrosococcus oceani (strain ATCC 19707 / BCRC 17464 / JCM 30415 / NCIMB 11848 / C-107).